Here is a 375-residue protein sequence, read N- to C-terminus: MVEIGMGRTARRTYELSEISIVPSRRTRSSKDVSTAWQLDAYRFEIPVVAHPTDALVSPEFAIELGRLGGLGVLNGEGLIGRHLDVEAKIAQLLEAAAADPEPSTAIRLLQELHAAPLNPDLLGAAVARIREAGVTTAVRVSPQNAQWLTPVLVAAGIDLLVIQGTIVSAERVASDGEPLNLKTFISELDIPVVAGGVLDHRTALHLMRTGAAGVIVGYGSTQGVTTTDEVLGISVPMATAIADAAAARRDYLDETGGRYVHVLADGDIHTSGELAKAIACGADAVVLGTPLAESAEALGEGWFWPAAAAHPSLPRGALLQIAVGERPPLARVLGGPSDDPFGGLNLVGGLRRSMAKAGYCDLKEFQKVGLTVGG.

Belongs to the IMPDH/GMPR family.

This is an uncharacterized protein from Mycobacterium tuberculosis (strain CDC 1551 / Oshkosh).